The chain runs to 130 residues: UPF0102 protein SCO5602 (130 aa).

It belongs to the UPF0102 family.

The sequence is that of UPF0102 protein SCO5602 from Streptomyces coelicolor (strain ATCC BAA-471 / A3(2) / M145).